The sequence spans 88 residues: Small ribosomal subunit protein uS15 (88 aa).

Belongs to the universal ribosomal protein uS15 family. In terms of assembly, part of the 30S ribosomal subunit. Forms a bridge to the 50S subunit in the 70S ribosome, contacting the 23S rRNA.

Functionally, one of the primary rRNA binding proteins, it binds directly to 16S rRNA where it helps nucleate assembly of the platform of the 30S subunit by binding and bridging several RNA helices of the 16S rRNA. In terms of biological role, forms an intersubunit bridge (bridge B4) with the 23S rRNA of the 50S subunit in the ribosome. The polypeptide is Small ribosomal subunit protein uS15 (Leptospira interrogans serogroup Icterohaemorrhagiae serovar copenhageni (strain Fiocruz L1-130)).